Reading from the N-terminus, the 248-residue chain is ATP synthase subunit a, chloroplastic (248 aa).

Transmembrane regions (helical) follow at residues 38-58 (QVLITSWIVIAVLLGSATIAV), 96-116 (VPFIGTMFLFIFVSNWSGALL), 135-155 (INTTVALALLTSVAYFYAGLA), 200-220 (LVVAVLVSPVPLVVPIPVMFL), and 221-241 (GLFTSGIQALIFATLAAAYIG).

This sequence belongs to the ATPase A chain family. F-type ATPases have 2 components, CF(1) - the catalytic core - and CF(0) - the membrane proton channel. CF(1) has five subunits: alpha(3), beta(3), gamma(1), delta(1), epsilon(1). CF(0) has four main subunits: a, b, b' and c.

The protein localises to the plastid. The protein resides in the chloroplast thylakoid membrane. Functionally, key component of the proton channel; it plays a direct role in the translocation of protons across the membrane. This Pinus koraiensis (Korean pine) protein is ATP synthase subunit a, chloroplastic.